The chain runs to 110 residues: UPF0145 protein (110 aa).

It belongs to the UPF0145 family.

This is UPF0145 protein from Listeria ivanovii.